Here is a 78-residue protein sequence, read N- to C-terminus: Longicornsin (78 aa).

The N-terminal stretch at 1–22 (MAESTTTCFLLLVTGYVTAVMS) is a signal peptide. Positions 23-29 (EEAHLRS) are excised as a propeptide. 3 cysteine pairs are disulfide-bonded: Cys35-Cys58, Cys43-Cys63, and Cys47-Cys65.

Salivary glands (at protein level).

The protein localises to the secreted. Has antibacterial activity against the Gram-positive bacteria S.aureus ATCC2592 (MIC=0.8 ug/ml), S.aureus 6A (MIC=0.8 ug/ml) and S.aureus 15A (MIC=1.6 ug/ml), and against the Gram-negative bacteria E.coli ATCC 25922 (MIC=3.2 ug/ml), E.coli 23A (MIC=6.4 ug/ml), E.coli 27A (MIC=6.4 ug/ml), P.aeruginosa 3A (MIC=3.2 ug/ml), P.aeruginosa 7A (MIC=0.8 ug/ml) and H.pylori NCTC11637 (MIC=6.4 ug/ml). Has antifungal activity against C.albidus ATCC2002 (MIC=25.6 ug/ml). Very low hemolytic activity against rabbit erythrocytes. This Haemaphysalis longicornis (Bush tick) protein is Longicornsin.